Here is a 249-residue protein sequence, read N- to C-terminus: Isoprenyl transferase 1 (249 aa).

Residue Asp30 is part of the active site. Asp30 is a Mg(2+) binding site. Substrate-binding positions include 31–34, Trp35, Arg43, His47, and 75–77; these read GNGR and STE. Residue Asn78 is the Proton acceptor of the active site. Substrate contacts are provided by residues Trp79, Arg81, Arg198, and 204–206; that span reads RMS. Residue Glu217 coordinates Mg(2+).

Belongs to the UPP synthase family. As to quaternary structure, homodimer. Mg(2+) is required as a cofactor.

Its function is as follows. Catalyzes the condensation of isopentenyl diphosphate (IPP) with allylic pyrophosphates generating different type of terpenoids. In Tropheryma whipplei (strain Twist) (Whipple's bacillus), this protein is Isoprenyl transferase 1.